A 98-amino-acid polypeptide reads, in one-letter code: MNQERLYTVLRGPHISEKSTVIADGAGQVVFQVAPDANKKEIKAAVEKLFDVQVTGVRTVNAKGKRKRFGMIRGRRRDWKKAYVTLAEGQDIDFLGGE.

Belongs to the universal ribosomal protein uL23 family. Part of the 50S ribosomal subunit. Contacts protein L29, and trigger factor when it is bound to the ribosome.

Its function is as follows. One of the early assembly proteins it binds 23S rRNA. One of the proteins that surrounds the polypeptide exit tunnel on the outside of the ribosome. Forms the main docking site for trigger factor binding to the ribosome. The sequence is that of Large ribosomal subunit protein uL23 from Halorhodospira halophila (strain DSM 244 / SL1) (Ectothiorhodospira halophila (strain DSM 244 / SL1)).